Consider the following 71-residue polypeptide: Exodeoxyribonuclease 7 small subunit (71 aa).

Belongs to the XseB family. In terms of assembly, heterooligomer composed of large and small subunits.

The protein localises to the cytoplasm. It catalyses the reaction Exonucleolytic cleavage in either 5'- to 3'- or 3'- to 5'-direction to yield nucleoside 5'-phosphates.. Bidirectionally degrades single-stranded DNA into large acid-insoluble oligonucleotides, which are then degraded further into small acid-soluble oligonucleotides. This Clostridium botulinum (strain 657 / Type Ba4) protein is Exodeoxyribonuclease 7 small subunit.